A 269-amino-acid polypeptide reads, in one-letter code: Formamidopyrimidine-DNA glycosylase (269 aa).

Catalysis depends on Pro-2, which acts as the Schiff-base intermediate with DNA. Glu-3 serves as the catalytic Proton donor. Lys-57 functions as the Proton donor; for beta-elimination activity in the catalytic mechanism. Residues His-90, Arg-109, and Arg-150 each coordinate DNA. The FPG-type zinc finger occupies 235 to 269 (NVYGRKGEPCEACGKAIESKVIGQRNTFFCTRCQR). Catalysis depends on Arg-259, which acts as the Proton donor; for delta-elimination activity.

The protein belongs to the FPG family. As to quaternary structure, monomer. It depends on Zn(2+) as a cofactor.

It carries out the reaction Hydrolysis of DNA containing ring-opened 7-methylguanine residues, releasing 2,6-diamino-4-hydroxy-5-(N-methyl)formamidopyrimidine.. The enzyme catalyses 2'-deoxyribonucleotide-(2'-deoxyribose 5'-phosphate)-2'-deoxyribonucleotide-DNA = a 3'-end 2'-deoxyribonucleotide-(2,3-dehydro-2,3-deoxyribose 5'-phosphate)-DNA + a 5'-end 5'-phospho-2'-deoxyribonucleoside-DNA + H(+). Involved in base excision repair of DNA damaged by oxidation or by mutagenic agents. Acts as a DNA glycosylase that recognizes and removes damaged bases. Has a preference for oxidized purines, such as 7,8-dihydro-8-oxoguanine (8-oxoG). Has AP (apurinic/apyrimidinic) lyase activity and introduces nicks in the DNA strand. Cleaves the DNA backbone by beta-delta elimination to generate a single-strand break at the site of the removed base with both 3'- and 5'-phosphates. This Alteromonas mediterranea (strain DSM 17117 / CIP 110805 / LMG 28347 / Deep ecotype) protein is Formamidopyrimidine-DNA glycosylase.